The following is a 159-amino-acid chain: Style cell-cycle inhibitor 1 (159 aa).

The segment at 1-86 (MVSERSSKEK…SDHKLKEGIP (86 aa)) is disordered. Basic and acidic residues predominate over residues 15-50 (ARSEDSSSSDYEEKVKRHRGTEKDDERRSRRSDKKD). Positions 51–63 (KKSHKHHKSSTSK) are enriched in basic residues. Positions 64–85 (KSKDDKPKKKHTESDHKLKEGI) are enriched in basic and acidic residues.

It localises to the nucleus. Functionally, component of the auxin signaling transduction pathway that regulates cell proliferation and differentiation during flowers stigmas and styles development. Involved in the regulation of auxin-related genes. This chain is Style cell-cycle inhibitor 1, found in Arabidopsis thaliana (Mouse-ear cress).